A 337-amino-acid chain; its full sequence is Nucleoid-associated protein HSM_0096 (337 aa).

The protein belongs to the YejK family.

The protein resides in the cytoplasm. It localises to the nucleoid. The chain is Nucleoid-associated protein HSM_0096 from Histophilus somni (strain 2336) (Haemophilus somnus).